The following is a 173-amino-acid chain: Co-chaperone protein HscB homolog (173 aa).

Residues 3–75 form the J domain; it reads NPFALFDLPI…ILRADCIIAL (73 aa).

The protein belongs to the HscB family. In terms of assembly, interacts with HscA and stimulates its ATPase activity.

Its function is as follows. Co-chaperone involved in the maturation of iron-sulfur cluster-containing proteins. Seems to help targeting proteins to be folded toward HscA. The protein is Co-chaperone protein HscB homolog of Mannheimia succiniciproducens (strain KCTC 0769BP / MBEL55E).